The sequence spans 1368 residues: Protein suppressor 2 of zeste (1368 aa).

The RING-type zinc-finger motif lies at 35-74; sequence CRLCRGYMIDPTTVDYCYHTYCRSCILKHLLRAVYCPECK. Disordered regions lie at residues 245-321, 448-628, 640-718, 861-903, 935-1001, 1057-1103, 1116-1141, 1161-1193, 1211-1271, and 1298-1322; these read SRIN…FKSL, QPLQ…QQQQ, TLPT…AVPQ, AGGK…KRSC, ALSG…NGTA, SANP…STSN, ISAN…GDDL, AASS…ASVR, STAA…KKPT, and VLSS…RPEP. Over residues 449-461 the composition is skewed to polar residues; sequence PLQQSASNPDSKY. Low complexity predominate over residues 462–495; that stretch reads SPNASPMSSCSSSTNGSSSSLGTADASTSTSTSS. The segment covering 496–506 has biased composition (basic residues); that stretch reads SHRKRKKKHSK. Composition is skewed to low complexity over residues 599 to 628 and 672 to 689; these read AEPE…QQQQ and PKQQ…VLQQ. Polar residues-rich tracts occupy residues 936-953 and 962-977; these read LSGQ…NAYR and LRNT…SKSS. 4 stretches are compositionally biased toward low complexity: residues 1078 to 1099, 1119 to 1138, 1161 to 1183, and 1231 to 1263; these read NNNN…NNNN, NSNG…TTNG, AASS…NANA, and STSN…ATSP.

It is found in the nucleus. Functionally, regulates expression of the homeotic selector genes by influencing higher-order chromatin structure through interaction with other proteins. This is Protein suppressor 2 of zeste (Su(z)2) from Drosophila melanogaster (Fruit fly).